A 398-amino-acid chain; its full sequence is MESLNNRLDWLQEQLLTLYEKDSKDIEDQIMQWNLLRQEQVLFHYARKKGIMRLGLQVVPSLAASQDKAKTAIEMTLYLSGLRDSQYGSEQWSLQDTSREIFLAPPDHTFKKGGQTIEVIYDEDPNNSTRHTVWRHIYYQNGDNRWRKAASDVDVHGVFYLEYDGVKNYYVDFQEEANRYSKTGRYTVQYEGKRFTNVMSPVNSSPLRTSGSPTDTNPATQGQSTQTARKAETKGSRHHPKSPAVRKRRPYGRRRSRSPRDTTLRRGEGESARASAGSGERVAFISPGDVGTSTRSPPKGGQSRLRRLIQEARDPPIICLKGGPNQLKCLRYRIKASNSSDFESISTTWHWVHNKCTDRVGHARMLVRFISTEQRDRFLDKVVVPKSVSVILGAFDGS.

Residues 1–205 (MESLNNRLDW…TNVMSPVNSS (205 aa)) are transactivation domain. Over residues 197 to 228 (NVMSPVNSSPLRTSGSPTDTNPATQGQSTQTA) the composition is skewed to polar residues. The disordered stretch occupies residues 197–304 (NVMSPVNSSP…RSPPKGGQSR (108 aa)). Positions 236–257 (SRHHPKSPAVRKRRPYGRRRSR) are enriched in basic residues. Residues 258–271 (SPRDTTLRRGEGES) are compositionally biased toward basic and acidic residues. The segment at 314-398 (DPPIICLKGG…SVILGAFDGS (85 aa)) is DNA-binding domain. Lys-321 is covalently cross-linked (Glycyl lysine isopeptide (Lys-Gly) (interchain with G-Cter in SUMO)).

This sequence belongs to the papillomaviridae E2 protein family. In terms of assembly, binds DNA as homodimer. Interacts with protein E1; this interaction greatly increases E1 DNA-binding activity. Interacts with protein L1; this interaction enhances E2-dependent replication and transcription activation. Interacts with protein L2; this interaction inhibits E2 transcriptional activity but not DNA replication function E2. Interacts with protein E7; this interaction inhibits E7 oncogenic activity. Interacts with host TAF1; this interaction modulates E2-dependent transcriptional regulation. Interacts with host BRD4; this interaction mediates E2 transcriptional activation function. Additionally, the interaction with host BRD4 on mitotic chromosomes mediates tethering of the viral genome. Interacts with host TOPBP1; this interaction is required for optimal viral DNA replication. In terms of processing, phosphorylated. Sumoylation plays a regulatory role in E2 transcriptional activity.

Its subcellular location is the host nucleus. Functionally, plays a role in the initiation of viral DNA replication. A dimer of E2 interacts with a dimer of E1 in order to improve specificity of E1 DNA binding activity. Once the complex recognizes and binds DNA at specific sites, the E2 dimer is removed from DNA. E2 also regulates viral transcription through binding to the E2RE response element (5'-ACCNNNNNNGGT-3') present in multiple copies in the regulatory regions of the viral genome. Activates or represses transcription depending on E2RE's position with regards to proximal promoter elements including the TATA-box. Repression occurs by sterically hindering the assembly of the transcription initiation complex. The protein is Regulatory protein E2 of Human papillomavirus type 63.